Here is a 318-residue protein sequence, read N- to C-terminus: tRNA uridine(34) hydroxylase (318 aa).

The Rhodanese domain maps to 123–217; sequence EDDDTVIIDA…YGKDPETKGE (95 aa). Cys-177 functions as the Cysteine persulfide intermediate in the catalytic mechanism.

This sequence belongs to the TrhO family.

It catalyses the reaction uridine(34) in tRNA + AH2 + O2 = 5-hydroxyuridine(34) in tRNA + A + H2O. Catalyzes oxygen-dependent 5-hydroxyuridine (ho5U) modification at position 34 in tRNAs. The polypeptide is tRNA uridine(34) hydroxylase (Staphylococcus aureus (strain USA300)).